A 212-amino-acid polypeptide reads, in one-letter code: Interleukin-6 (212 aa).

Residues 1–29 (MNSLSTSAFSPVAFSLGLLLVMATAFPTP) form the signal peptide. C72 and C78 are joined by a disulfide. S81 bears the Phosphoserine mark. A disulfide bond links C101 and C111. Residues 156-175 (QKGKNPDKATTPNPTTNAGL) are disordered. Residues 163-175 (KATTPNPTTNAGL) are compositionally biased toward polar residues.

It belongs to the IL-6 superfamily. In terms of assembly, component of a hexamer of two molecules each of IL6, IL6R and IL6ST; first binds to IL6R to associate with the signaling subunit IL6ST. Interacts with IL6R (via the N-terminal ectodomain); this interaction may be affected by IL6R-binding with SORL1, hence decreasing IL6 cis signaling. Interacts with SORL1 (via the N-terminal ectodomain); this interaction leads to IL6 internalization and lysosomal degradation. May form a trimeric complex with the soluble SORL1 ectodomain and soluble IL6R receptor; this interaction might stabilize circulating IL6, hence promoting IL6 trans signaling.

The protein resides in the secreted. Its function is as follows. Cytokine with a wide variety of biological functions in immunity, tissue regeneration, and metabolism. Binds to IL6R, then the complex associates to the signaling subunit IL6ST/gp130 to trigger the intracellular IL6-signaling pathway. The interaction with the membrane-bound IL6R and IL6ST stimulates 'classic signaling', whereas the binding of IL6 and soluble IL6R to IL6ST stimulates 'trans-signaling'. Alternatively, 'cluster signaling' occurs when membrane-bound IL6:IL6R complexes on transmitter cells activate IL6ST receptors on neighboring receiver cells. Functionally, IL6 is a potent inducer of the acute phase response. Rapid production of IL6 contributes to host defense during infection and tissue injury, but excessive IL6 synthesis is involved in disease pathology. In the innate immune response, is synthesized by myeloid cells, such as macrophages and dendritic cells, upon recognition of pathogens through toll-like receptors (TLRs) at the site of infection or tissue injury. In the adaptive immune response, is required for the differentiation of B cells into immunoglobulin-secreting cells. Plays a major role in the differentiation of CD4(+) T cell subsets. Essential factor for the development of T follicular helper (Tfh) cells that are required for the induction of germinal-center formation. Required to drive naive CD4(+) T cells to the Th17 lineage. Also required for proliferation of myeloma cells and the survival of plasmablast cells. In terms of biological role, acts as an essential factor in bone homeostasis and on vessels directly or indirectly by induction of VEGF, resulting in increased angiogenesis activity and vascular permeability. Induces, through 'trans-signaling' and synergistically with IL1B and TNF, the production of VEGF. Involved in metabolic controls, is discharged into the bloodstream after muscle contraction increasing lipolysis and improving insulin resistance. 'Trans-signaling' in central nervous system also regulates energy and glucose homeostasis. Mediates, through GLP-1, crosstalk between insulin-sensitive tissues, intestinal L cells and pancreatic islets to adapt to changes in insulin demand. Also acts as a myokine. Plays a protective role during liver injury, being required for maintenance of tissue regeneration. Also has a pivotal role in iron metabolism by regulating HAMP/hepcidin expression upon inflammation or bacterial infection. Through activation of IL6ST-YAP-NOTCH pathway, induces inflammation-induced epithelial regeneration. The sequence is that of Interleukin-6 (IL6) from Sus scrofa (Pig).